The primary structure comprises 257 residues: Small ribosomal subunit protein uS3 (257 aa).

One can recognise a KH type-2 domain in the interval 40–110 (IRKYLSTKYK…LVSLKVVEVQ (71 aa)). The disordered stretch occupies residues 223–257 (ANKEFSRSSKPKKGSFNRSSRSKNTKPAPKQAVSE). Positions 231–246 (SKPKKGSFNRSSRSKN) are enriched in basic residues.

It belongs to the universal ribosomal protein uS3 family. In terms of assembly, part of the 30S ribosomal subunit. Forms a tight complex with proteins S10 and S14.

Binds the lower part of the 30S subunit head. Binds mRNA in the 70S ribosome, positioning it for translation. This Ureaplasma parvum serovar 3 (strain ATCC 27815 / 27 / NCTC 11736) protein is Small ribosomal subunit protein uS3.